We begin with the raw amino-acid sequence, 365 residues long: MKKQRIVVKIGSSSLTNSKGSIDEAKIREHVQAISVLKKAGHEMILITSGAVAAGFSSLGYPSRPVTIKGKQAAAAVGQTLLMQQYMNQFKQYSLTPGQILLTRNDFSKRERYRNAYATIMELLERGVIPIINENDSTSVEELTFGDNDMLSALVSGLIHADQLMILTDINGLYDANPNENPEAKRFDYLPEITPELLGYAGSAGSKVGTGGMKSKLLATQTALSLGVKVFIGTGSGEQKLADILDGRGDGTYIGDKELSSVNNTRQWIQFHSPISGEIIIDAGAEEAMIHNGSSLLPAGVVGVNGSFPKGAVVEVRGPGGVIGKGQTHYSSEEIMEAKGKRSDELDFEKTFEVIHRNDWVNVKD.

K9 contacts ATP. Substrate-binding residues include S49, D136, and N148. Residues 168 to 169 (TD) and 210 to 216 (TGGMKSK) each bind ATP. The PUA domain occupies 276-353 (SGEIIIDAGA…DELDFEKTFE (78 aa)).

It belongs to the glutamate 5-kinase family.

It localises to the cytoplasm. It carries out the reaction L-glutamate + ATP = L-glutamyl 5-phosphate + ADP. Its pathway is amino-acid biosynthesis; L-proline biosynthesis; L-glutamate 5-semialdehyde from L-glutamate: step 1/2. Its function is as follows. Catalyzes the transfer of a phosphate group to glutamate to form L-glutamate 5-phosphate. In Bacillus subtilis (strain 168), this protein is Glutamate 5-kinase 1.